A 405-amino-acid polypeptide reads, in one-letter code: Type II secretion system protein F (405 aa).

The Cytoplasmic portion of the chain corresponds to 1–168 (MAAFEYLALD…QRQQSRQKIQ (168 aa)). Ca(2+) is bound by residues T97, E151, and D155. The helical transmembrane segment at 169–189 (LALLYPVILMVASLAIVGFLL) threads the bilayer. Topologically, residues 190–219 (GYVVPDVVRVFIDSGQTLPLLTRVLIGVSD) are periplasmic. Residues 220 to 239 (WVKAWGALAFVAAIGGVIGF) form a helical membrane-spanning segment. The Cytoplasmic portion of the chain corresponds to 240–376 (RYALRKDAFR…IGLMVGLFEP (137 aa)). A helical transmembrane segment spans residues 377–397 (FMLIFMGAVVLVIVLAILLPI). Residues 398–405 (LSLNQLVG) are Periplasmic-facing.

This sequence belongs to the GSP F family. In terms of assembly, type II secretion system is composed of four main components: the outer membrane complex, the inner membrane complex, the cytoplasmic secretion ATPase and the periplasm-spanning pseudopilus. Homodimer. Interacts with XcpR/GspE and XcpY/GspL components.

It localises to the cell inner membrane. Its function is as follows. Component of the type II secretion system inner membrane complex required for the energy-dependent secretion of extracellular factors such as proteases and toxins from the periplasm. This is Type II secretion system protein F (xcpS) from Pseudomonas aeruginosa (strain ATCC 15692 / DSM 22644 / CIP 104116 / JCM 14847 / LMG 12228 / 1C / PRS 101 / PAO1).